Here is a 456-residue protein sequence, read N- to C-terminus: Exodeoxyribonuclease 7 large subunit (456 aa).

This sequence belongs to the XseA family. Heterooligomer composed of large and small subunits.

The protein resides in the cytoplasm. It catalyses the reaction Exonucleolytic cleavage in either 5'- to 3'- or 3'- to 5'-direction to yield nucleoside 5'-phosphates.. Its function is as follows. Bidirectionally degrades single-stranded DNA into large acid-insoluble oligonucleotides, which are then degraded further into small acid-soluble oligonucleotides. This chain is Exodeoxyribonuclease 7 large subunit, found in Lactobacillus delbrueckii subsp. bulgaricus (strain ATCC BAA-365 / Lb-18).